Consider the following 641-residue polypeptide: White-opaque regulator 3 (641 aa).

Polar residues predominate over residues 13 to 27 (ANVNHQQLSQDTNSI). Disordered regions lie at residues 13–38 (ANVNHQQLSQDTNSIPQQQLQQQQQP), 146–245 (QLAS…PMTR), and 258–287 (PIIYPKSSNSTNGNNSNGQNSSSIPPPEPR). Composition is skewed to low complexity over residues 28–38 (PQQQLQQQQQP) and 151–160 (QNQDQNQSQN). The segment covering 161–172 (RYEQSSMTSIHT) has biased composition (polar residues). The span at 173-184 (NDNSSSVNNSPN) shows a compositional bias: low complexity. Polar residues predominate over residues 193 to 204 (STFQPQHSNEGS). Low complexity-rich tracts occupy residues 216 to 242 (QQQQQPQQQQQPQQQQQPQQQQQPQQP) and 264 to 280 (SSNSTNGNNSNGQNSSS). The segment at 317–337 (CRRCGSEIPLAERRFVLCPSC) adopts a dksA C4-type zinc-finger fold. Disordered regions lie at residues 366–409 (LSKE…KVCQ), 480–507 (MSHQYIQPPPPPPPPLMTGHHQFQPQPH), 522–550 (NSGVAGIQQPNNGMVVGDQQQQQQQHNGS), and 568–641 (LQLQ…YPNN). The segment covering 379 to 400 (QNNKSNEDQNNESRRGSQEKPA) has biased composition (basic and acidic residues). A compositionally biased stretch (pro residues) spans 486 to 495 (QPPPPPPPPL). Polar residues predominate over residues 522-533 (NSGVAGIQQPNN). Over residues 569 to 579 (QLQQQQQQQQQ) the composition is skewed to low complexity. Pro residues predominate over residues 597-606 (SFPPPPPPPL). The span at 610 to 641 (QHQGLQQYSHAQQQQQQQHQQQQPYHQEYPNN) shows a compositional bias: low complexity.

It is found in the nucleus. In terms of biological role, transcription factor that modulates the white-opaque switch. This Candida albicans (strain SC5314 / ATCC MYA-2876) (Yeast) protein is White-opaque regulator 3 (WOR3).